We begin with the raw amino-acid sequence, 142 residues long: Large ribosomal subunit protein uL11 (142 aa).

This sequence belongs to the universal ribosomal protein uL11 family. As to quaternary structure, part of the ribosomal stalk of the 50S ribosomal subunit. Interacts with L10 and the large rRNA to form the base of the stalk. L10 forms an elongated spine to which L12 dimers bind in a sequential fashion forming a multimeric L10(L12)X complex. Post-translationally, one or more lysine residues are methylated.

Its function is as follows. Forms part of the ribosomal stalk which helps the ribosome interact with GTP-bound translation factors. The polypeptide is Large ribosomal subunit protein uL11 (Shewanella sp. (strain ANA-3)).